Consider the following 416-residue polypeptide: Formyl-CoA:oxalate CoA-transferase (416 aa).

CoA contacts are provided by residues 17-18 (QS), Arg38, 72-75 (LNTK), 96-98 (NFH), His104, and 137-140 (KAYE). The active-site Nucleophile is Asp169. Residue 248–250 (GGQ) participates in substrate binding. 273–275 (QEQ) contacts CoA.

Belongs to the CoA-transferase III family. Frc subfamily. In terms of assembly, homodimer.

The enzyme catalyses formyl-CoA + oxalate = oxalyl-CoA + formate. The protein operates within metabolic intermediate degradation; oxalate degradation; CO(2) and formate from oxalate: step 1/2. In terms of biological role, involved in the catabolism of oxalate and in the adapatation to low pH via the induction of the oxalate-dependent acid tolerance response (ATR). Catalyzes the transfer of the CoA moiety from formyl-CoA to oxalate. The chain is Formyl-CoA:oxalate CoA-transferase from Escherichia coli O17:K52:H18 (strain UMN026 / ExPEC).